Reading from the N-terminus, the 413-residue chain is Probable aminotransferase sirI (413 aa).

Residue lysine 255 is modified to N6-(pyridoxal phosphate)lysine.

It belongs to the class-I pyridoxal-phosphate-dependent aminotransferase family. Pyridoxal 5'-phosphate is required as a cofactor.

Its pathway is mycotoxin biosynthesis. Probable aminotransferase; part of the gene cluster that mediates the biosynthesis of sirodesmin PL, an epipolythiodioxopiperazine (ETP) characterized by a disulfide bridged cyclic dipeptide and that acts as a phytotoxin which is involved in the blackleg didease of canola. SirD catalyzes the O-prenylation of L-tyrosine (L-Tyr) in the presence of dimethylallyl diphosphate (DMAPP) to yield 4-O-dimethylallyl-L-Tyr, and therefore represents probably the first pathway-specific enzyme in the biosynthesis of sirodesmin PL. 4-O-dimethylallyl-L-Tyr, then undergoes condensation with L-Ser in a reaction catalyzed by the non-ribosomal peptide synthase sirP to form the diketopiperazine (DKP) backbone. Further bishydroxylation of the DKP performed by the cytochrome P450 monooxygenase sirC leads to the production of the intermediate phomamide. This step is essential to form the reactive thiol group required for toxicity of sirodesmin PL. The next steps of sirodesmin biosynthesis are not well understood yet, but some predictions could be made from intermediate compounds identification. Phomamide is converted into phomalizarine via oxidation, probably by sirT. Further oxidation, methylation (by sirM or sirN) and reduction steps convert phomalizarine to deacetyl sirodesmin. Finally, acetyltransferase sirH probably acetylates deacetyl sirodesmin to produce sirodesmin PL. The polypeptide is Probable aminotransferase sirI (Leptosphaeria maculans (Blackleg fungus)).